A 543-amino-acid chain; its full sequence is Phosphoenolpyruvate carboxykinase (ATP) (543 aa).

244-251 (GLSGTGKT) provides a ligand contact to ATP.

Belongs to the phosphoenolpyruvate carboxykinase (ATP) family.

The enzyme catalyses oxaloacetate + ATP = phosphoenolpyruvate + ADP + CO2. The protein operates within carbohydrate biosynthesis; gluconeogenesis. This chain is Phosphoenolpyruvate carboxykinase (ATP) (PCK1), found in Kluyveromyces lactis (strain ATCC 8585 / CBS 2359 / DSM 70799 / NBRC 1267 / NRRL Y-1140 / WM37) (Yeast).